The following is a 518-amino-acid chain: MTNLPEHQSSPTEQSSAEVKKIPTMIEGFDDISHGGLPQGRTTLVSGTSGTGKTLFAVQFLYNGITIFNEPGIFVTFEESPQDIIKNALSFGWNLQSLIDQGKLFILDASPDPDGQEVAGDFDLSALIERIQYAIRKYKATRVSIDSVTAVFQQYDAASVVRREIFRLAFRLKQLGVTTIMTTERVDEYGPVARFGVEEFVSDNVVILRNVLEGERRRRTVEILKLRGTTHMKGEYPFTINNGINIFPLGAMRLTQRSSNVRVSSGVKTLDEMCGGGFFKDSIILATGATGTGKTLLVSKFLETGCQQGERALLFAYEESRAQLSRNASSWGIDFEELERRGLLRIICAYPESAGLEDHLQIIKSEIADFKPSRVAIDSLSALARGVSNNAFRQFVIGVTGFAKQEEITGFFTNTTDQFMGSNSITESHISTITDTILLLQYVEIRGEMSRAINVFKMRGSWHDKGIREYVITEKGAEIRDSFRNFEGIISGTPTRISVDEKTELARIAKGMQDLESE.

The region spanning Met1–Phe247 is the KaiC 1 domain. The ATP site is built by Ser49, Gly50, Thr51, Gly52, Lys53, Thr54, and Leu55. Thr54 is a Mg(2+) binding site. The active-site Proton acceptor in CI (KaiC 1) is the Glu78. ATP is bound at residue Ser90. The segment at Gln116–Asp123 is B-loop, required to bind KaiB and SasA. Residues Lys225, Leu226, Arg227, Thr229, and His231 each contribute to the ATP site. Positions Pro248–Asn260 are linker. Residues Val261–Glu518 form the KaiC 2 domain. ATP contacts are provided by Thr290, Gly291, Thr292, Gly293, Lys294, Thr295, and Leu296. Thr295 provides a ligand contact to Mg(2+). Glu318 lines the Mg(2+) pocket. Residue Glu318 is the Proton acceptor in CII (KaiC 2) of the active site. An ATP-binding site is contributed by Trp331. The residue at position 431 (Ser431) is a Phosphoserine; by autocatalysis. Residue Thr432 is modified to Phosphothreonine; by autocatalysis. ATP-binding residues include Arg451, Lys457, Met458, Arg459, Ser461, His463, and Lys465. The interval Gly488–Ile497 is A-loop, interacts with KaiA.

It belongs to the KaiC family. In terms of assembly, homohexamer resembling 2 stacked donuts rings with a central pore nearly blocked on one side; hexamerization is dependent on ATP-binding. Binds 2 ATP per monomer, at the subunit interface on each ring. The KaiABC complex composition changes during the circadian cycle to control KaiC phosphorylation. Complexes KaiC(6), KaiA(2-4):KaiC(6), KaiB(6):KaiC(6) and KaiC(6):KaiB(6):KaiA(12) are among the most important forms, many form cooperatively. Interacts with SasA, probably as 1 SasA trimer:1 KaiC homohexamer, has highest affinity for unphosphorylated SasA. The CI domain binds to KaiB and SasA; as they have a similar fold they compete for the same site on CI. KaiB assumes a thioredoxin-like form called KaiB(fs) when bound to KaiC. Mg(2+) serves as cofactor. In terms of processing, phosphorylated on serine/threonine residues by autocatalysis. Both phosphorylated and unphosphorylated forms exist. Both autophosphorylates and autodephosphorylates. Phosphorylated form correlates with clock speed. Post-translationally, phosphorylated on serine and threonine residues by autocatalysis. Has a 4 step phosphorylation cycle; the autokinase acts first on Thr-432, then Ser-431. When Ser-431 is modified KaiC switches to an autophosphatase mode, acting first on phospho-Thr-432 then phospho-Ser-431.

The enzyme catalyses L-seryl-[protein] + ATP = O-phospho-L-seryl-[protein] + ADP + H(+). It carries out the reaction L-threonyl-[protein] + ATP = O-phospho-L-threonyl-[protein] + ADP + H(+). It catalyses the reaction ATP + H2O = ADP + phosphate + H(+). With respect to regulation, the interaction with KaiA enhances its phosphorylation status, while the interaction with KaiB decreases it. Central component of the KaiABC oscillator complex, which constitutes the main circadian regulator in cyanobacteria. Complex composition changes during the circadian cycle to control KaiC phosphorylation. KaiA stimulates KaiC autophosphorylation, while KaiB sequesters KaiA, leading to KaiC autodephosphorylation. Clock output pathways impact the RpaA transcriptional regulator. KaiC enhances the autophosphorylation activity of SasA, which then transfers its phosphate group to RpaA to activate it. KaiB and KaiC together enhance the phospho-RpaA dephosphatase activity of CikA. Functionally, stimulates SasA autophosphorylation. Fully phosphorylated KaiC (tested with phosphomimetic Asp-431-432-Asp) is the best stimulant, requires the ATPase activity of the CII domain. Unphosphorylated SasA associates with KaiC and its autophosphorylation activity is enhanced. Phospho-SasA is released and associates with RpaA, transferring its phosphate group. Formation of the KaiA:KaiB complex is promoted by KaiC, helping switch KaiC from its autophosphorylation to autodephosphatase function. In terms of biological role, has a weak, temperature-independent ATPase activity (about 14 molecules of ATP per day) that defines the circadian period. ATPase activity is mostly contributed by the CI domain; the CII domain augments the activity. The addition of KaiA increases activity. ATPase is inhibited during the KaiC phosphorylating phase and activated during the KaiC dephosphorylating phase. This is Circadian clock oscillator protein KaiC from Thermosynechococcus vestitus (strain NIES-2133 / IAM M-273 / BP-1).